A 201-amino-acid chain; its full sequence is Peptide deformylase (201 aa).

Positions 121 and 163 each coordinate Fe cation. The active site involves Glu164. Position 167 (His167) interacts with Fe cation.

The protein belongs to the polypeptide deformylase family. The cofactor is Fe(2+).

The catalysed reaction is N-terminal N-formyl-L-methionyl-[peptide] + H2O = N-terminal L-methionyl-[peptide] + formate. Its function is as follows. Removes the formyl group from the N-terminal Met of newly synthesized proteins. Requires at least a dipeptide for an efficient rate of reaction. N-terminal L-methionine is a prerequisite for activity but the enzyme has broad specificity at other positions. The sequence is that of Peptide deformylase from Synechococcus sp. (strain CC9605).